Consider the following 76-residue polypeptide: MTYKATILAIFMIILVLGIGTKETRGQETCHDLIMKRDCDEATCVNMCQQKWKGSGGSCFQNFNVMSCICNFPCQV.

The signal sequence occupies residues methionine 1–glycine 26. 4 disulfide bridges follow: cysteine 30–cysteine 74, cysteine 39–cysteine 59, cysteine 44–cysteine 68, and cysteine 48–cysteine 70.

This sequence belongs to the DEFL family.

It localises to the secreted. The polypeptide is Putative defensin-like protein 121 (LCR55) (Arabidopsis thaliana (Mouse-ear cress)).